A 91-amino-acid chain; its full sequence is Large ribosomal subunit protein bL28 (91 aa).

Residues 1 to 23 (MSRVCELTGKGPMSGNNVSHANN) are disordered.

Belongs to the bacterial ribosomal protein bL28 family.

This chain is Large ribosomal subunit protein bL28, found in Paracoccus denitrificans (strain Pd 1222).